The chain runs to 424 residues: Vasopressin V1b receptor (424 aa).

The disordered stretch occupies residues 1 to 22; the sequence is MDSGPLWDANPTPRGTLSAPNA. The Extracellular portion of the chain corresponds to 1 to 35; the sequence is MDSGPLWDANPTPRGTLSAPNATTPWLGRDEELAK. The span at 13 to 22 shows a compositional bias: polar residues; sequence PRGTLSAPNA. N-linked (GlcNAc...) asparagine glycosylation occurs at Asn21. The chain crosses the membrane as a helical span at residues 36 to 59; sequence VEIGVLATVLVLATGGNLAVLLTL. Residues 60 to 71 lie on the Cytoplasmic side of the membrane; the sequence is GQLGRKRSRMHL. Residues 72 to 93 form a helical membrane-spanning segment; sequence FVLHLALTDLAVALFQVLPQLL. Over 94-108 the chain is Extracellular; the sequence is WDITYRFQGPDLLCR. An intrachain disulfide couples Cys107 to Cys186. A helical transmembrane segment spans residues 109-130; the sequence is AVKYLQVLSMFASTYMLLAMTL. The Cytoplasmic segment spans residues 131–151; the sequence is DRYLAVCHPLRSLQQPGQSTY. A helical transmembrane segment spans residues 152 to 173; sequence LLIAAPWLLAAIFSLPQVFIFS. Over 174 to 201 the chain is Extracellular; sequence LREVIQGSGVLDCWADFGFPWGPRAYLT. The chain crosses the membrane as a helical span at residues 202 to 222; sequence WTTLAIFVLPVTMLTACYSLI. At 223-283 the chain is on the cytoplasmic side; it reads CHEICKNLKV…RAKIRTVKMT (61 aa). The chain crosses the membrane as a helical span at residues 284–303; it reads FVIVLAYIACWAPFFSVQMW. Residues 304–321 lie on the Extracellular side of the membrane; it reads SVWDKNAPDEDSTNVAFT. A helical membrane pass occupies residues 322–341; the sequence is ISMLLGNLNSCCNPWIYMGF. Topologically, residues 342-424 are cytoplasmic; it reads NSHLLPRPLR…GEGTAETIIF (83 aa). Residues 398–417 form a disordered region; that stretch reads SGRPRPEESPRDLELADGEG. Positions 401–411 are enriched in basic and acidic residues; sequence PRPEESPRDLE.

The protein belongs to the G-protein coupled receptor 1 family. Vasopressin/oxytocin receptor subfamily.

Its subcellular location is the cell membrane. Functionally, receptor for arginine vasopressin. The activity of this receptor is mediated by G proteins which activate a phosphatidyl-inositol-calcium second messenger system. Its function is as follows. (Microbial infection) During SARS coronavirus-2/SARS-CoV-2 infection, may recognize and internalize the complex formed by AVP/Arg-vasopressin, SARS-CoV-2 spike protein and secreted ACE2 through DNM2/dynamin 2-dependent endocytosis. The sequence is that of Vasopressin V1b receptor from Homo sapiens (Human).